We begin with the raw amino-acid sequence, 547 residues long: Hydroxylamine reductase (547 aa).

Residues Cys5, Cys8, Cys17, and Cys23 each contribute to the [4Fe-4S] cluster site. Residues His242, Glu266, Cys310, Cys401, Cys429, Cys454, Glu489, and Lys491 each coordinate hybrid [4Fe-2O-2S] cluster. A Cysteine persulfide modification is found at Cys401.

It belongs to the HCP family. [4Fe-4S] cluster is required as a cofactor. Hybrid [4Fe-2O-2S] cluster serves as cofactor.

It is found in the cytoplasm. It carries out the reaction A + NH4(+) + H2O = hydroxylamine + AH2 + H(+). Catalyzes the reduction of hydroxylamine to form NH(3) and H(2)O. This is Hydroxylamine reductase from Thermoanaerobacter pseudethanolicus (strain ATCC 33223 / 39E) (Clostridium thermohydrosulfuricum).